Consider the following 215-residue polypeptide: UPF0488 protein C8orf33 homolog (215 aa).

Disordered regions lie at residues Met1–Leu72, Leu87–Lys111, and Cys158–Pro199. Basic residues predominate over residues Ala29–Lys39. Over residues Ala40–Thr63 the composition is skewed to basic and acidic residues. 2 stretches are compositionally biased toward basic and acidic residues: residues Glu167–Gly178 and Thr188–Pro199.

The protein belongs to the UPF0488 family.

This is UPF0488 protein C8orf33 homolog from Danio rerio (Zebrafish).